The following is a 405-amino-acid chain: CLIP domain-containing serine protease B8 (405 aa).

A signal peptide spans 1-24 (MSSAVLLLLVCGCALAVLSPVAYG). Disulfide bonds link C41–C94, C52–C84, and C58–C95. The Clip domain occupies 41–95 (CDIPNEPNPGQCMLPAECVAYGKINDVSSLSSIERFSFIKQIQCNGSDTVPYVCC). 2 N-linked (GlcNAc...) asparagine glycosylation sites follow: N85 and N108. The region spanning 137–404 (IRGGQLAEID…YLPWIKMYTG (268 aa)) is the Peptidase S1 domain. C167 and C183 form a disulfide bridge. Residues H182 and D249 each act as charge relay system in the active site. 2 cysteine pairs are disulfide-bonded: C322–C339 and C349–C380. Residue S353 is the Charge relay system of the active site.

The protein belongs to the peptidase S1 family. CLIP subfamily. In terms of processing, proteolytic cleavage is necessary for activation. Cleaved and activated by CLIPB4.

It localises to the secreted. In terms of biological role, serine protease that functions in the melanization-mediated immune response. Preferentially, cleaves substrates with an arginine at the P1 site. May be involved in the activation of the prophenoloxidase cascade upstream of CLIPB9; does not cleave prophenoloxidase. The polypeptide is CLIP domain-containing serine protease B8 (Anopheles gambiae (African malaria mosquito)).